We begin with the raw amino-acid sequence, 278 residues long: Rhomboid protease GlpG (278 aa).

Transmembrane regions (helical) follow at residues 95 to 115 (GPLTLGVMALCIVVYILMQIL), 143 to 163 (AFLHFSLLHITFNLLWWWYLG), 170 to 190 (LGSGKLFVLAVVSAFFSGWAQ), 192 to 212 (LFSGALFGGLSGVVYALMGYC), 224 to 241 (LMLPRGLMVFSVLWLVAG), and 245 to 267 (ILGMSIANAAHVAGLVLGLLMAF). The Nucleophile role is filled by serine 202. Residue histidine 255 is part of the active site.

The protein belongs to the peptidase S54 family.

The protein localises to the cell inner membrane. It carries out the reaction Cleaves type-1 transmembrane domains using a catalytic dyad composed of serine and histidine that are contributed by different transmembrane domains.. Functionally, rhomboid-type serine protease that catalyzes intramembrane proteolysis. The chain is Rhomboid protease GlpG from Serratia proteamaculans (strain 568).